A 37-amino-acid polypeptide reads, in one-letter code: Rugosin-C (37 aa).

An intrachain disulfide couples cysteine 31 to cysteine 37.

The protein belongs to the frog skin active peptide (FSAP) family. Brevinin subfamily. In terms of tissue distribution, expressed by the skin glands.

It localises to the secreted. Functionally, has antibacterial activity against Gram-positive bacteria. The chain is Rugosin-C from Glandirana rugosa (Japanese wrinkled frog).